A 115-amino-acid polypeptide reads, in one-letter code: Nucleoid-associated protein alr5067 (115 aa).

The protein belongs to the YbaB/EbfC family. In terms of assembly, homodimer.

It localises to the cytoplasm. It is found in the nucleoid. Binds to DNA and alters its conformation. May be involved in regulation of gene expression, nucleoid organization and DNA protection. In Nostoc sp. (strain PCC 7120 / SAG 25.82 / UTEX 2576), this protein is Nucleoid-associated protein alr5067.